An 86-amino-acid chain; its full sequence is Small ribosomal subunit protein bS18 (86 aa).

This sequence belongs to the bacterial ribosomal protein bS18 family. As to quaternary structure, part of the 30S ribosomal subunit. Forms a tight heterodimer with protein bS6.

In terms of biological role, binds as a heterodimer with protein bS6 to the central domain of the 16S rRNA, where it helps stabilize the platform of the 30S subunit. This is Small ribosomal subunit protein bS18 from Heliobacterium modesticaldum (strain ATCC 51547 / Ice1).